A 435-amino-acid polypeptide reads, in one-letter code: GTPase Obg (435 aa).

An Obg domain is found at 6-164 (ADFVDRVKIF…RWLELELKIL (159 aa)). The OBG-type G domain maps to 165-335 (ADVGLVGYPN…LVSKLASIVR (171 aa)). GTP-binding positions include 171-178 (GYPNVGKS), 196-200 (FTTLI), 217-220 (DIPG), 287-290 (NKID), and 316-318 (SAV). Mg(2+)-binding residues include Ser178 and Thr198. Residues 357 to 435 (RRLPEKFHLE…IGDFEFEYRE (79 aa)) form the OCT domain.

This sequence belongs to the TRAFAC class OBG-HflX-like GTPase superfamily. OBG GTPase family. As to quaternary structure, monomer. It depends on Mg(2+) as a cofactor.

Its subcellular location is the cytoplasm. An essential GTPase which binds GTP, GDP and possibly (p)ppGpp with moderate affinity, with high nucleotide exchange rates and a fairly low GTP hydrolysis rate. Plays a role in control of the cell cycle, stress response, ribosome biogenesis and in those bacteria that undergo differentiation, in morphogenesis control. This Thermotoga maritima (strain ATCC 43589 / DSM 3109 / JCM 10099 / NBRC 100826 / MSB8) protein is GTPase Obg.